The chain runs to 151 residues: Large ribosomal subunit protein uL22 (151 aa).

The span at M1–A18 shows a compositional bias: polar residues. A disordered region spans residues M1–L23.

This sequence belongs to the universal ribosomal protein uL22 family. In terms of assembly, part of the 50S ribosomal subunit.

Its function is as follows. This protein binds specifically to 23S rRNA. It makes multiple contacts with different domains of the 23S rRNA in the assembled 50S subunit and ribosome. Functionally, the globular domain of the protein is located near the polypeptide exit tunnel on the outside of the subunit, while an extended beta-hairpin is found that lines the wall of the exit tunnel in the center of the 70S ribosome. The sequence is that of Large ribosomal subunit protein uL22 from Methanosarcina mazei (strain ATCC BAA-159 / DSM 3647 / Goe1 / Go1 / JCM 11833 / OCM 88) (Methanosarcina frisia).